We begin with the raw amino-acid sequence, 308 residues long: Oxygen-dependent coproporphyrinogen-III oxidase (308 aa).

S94 lines the substrate pocket. A divalent metal cation-binding residues include H98 and H108. H108 functions as the Proton donor in the catalytic mechanism. 110–112 (NVR) contacts substrate. Residues H147 and H177 each contribute to the a divalent metal cation site. An important for dimerization region spans residues 242–277 (YVEFNLVWDRGTLFGLQTGGRTESILMSMPPLVRWE). 260-262 (GGR) is a substrate binding site.

Belongs to the aerobic coproporphyrinogen-III oxidase family. As to quaternary structure, homodimer. The cofactor is a divalent metal cation.

The protein resides in the cytoplasm. It carries out the reaction coproporphyrinogen III + O2 + 2 H(+) = protoporphyrinogen IX + 2 CO2 + 2 H2O. The protein operates within porphyrin-containing compound metabolism; protoporphyrin-IX biosynthesis; protoporphyrinogen-IX from coproporphyrinogen-III (O2 route): step 1/1. In terms of biological role, involved in the heme biosynthesis. Catalyzes the aerobic oxidative decarboxylation of propionate groups of rings A and B of coproporphyrinogen-III to yield the vinyl groups in protoporphyrinogen-IX. The chain is Oxygen-dependent coproporphyrinogen-III oxidase from Yersinia enterocolitica serotype O:8 / biotype 1B (strain NCTC 13174 / 8081).